A 169-amino-acid chain; its full sequence is NAD(P)H-quinone oxidoreductase subunit J, chloroplastic (169 aa).

Belongs to the complex I 30 kDa subunit family. In terms of assembly, NDH is composed of at least 16 different subunits, 5 of which are encoded in the nucleus.

Its subcellular location is the plastid. It localises to the chloroplast thylakoid membrane. The enzyme catalyses a plastoquinone + NADH + (n+1) H(+)(in) = a plastoquinol + NAD(+) + n H(+)(out). The catalysed reaction is a plastoquinone + NADPH + (n+1) H(+)(in) = a plastoquinol + NADP(+) + n H(+)(out). Functionally, NDH shuttles electrons from NAD(P)H:plastoquinone, via FMN and iron-sulfur (Fe-S) centers, to quinones in the photosynthetic chain and possibly in a chloroplast respiratory chain. The immediate electron acceptor for the enzyme in this species is believed to be plastoquinone. Couples the redox reaction to proton translocation, and thus conserves the redox energy in a proton gradient. This Physcomitrium patens (Spreading-leaved earth moss) protein is NAD(P)H-quinone oxidoreductase subunit J, chloroplastic.